The chain runs to 386 residues: Zinc finger protein 385A (386 aa).

Residues 74-98 (ISCNVCQIRFNSQSQAEAHYKGNRH) form a Matrin-type 1 zinc finger. The interval 88–193 (QAEAHYKGNR…ASLPGGSKEE (106 aa)) is disordered. The segment covering 103–121 (KGIEAAKTRGREPSVRESG) has biased composition (basic and acidic residues). The interval 145 to 351 (NGLGPAPGSP…AGSPLSLRPA (207 aa)) is necessary for binding to ITPR1, CEBPA and p53/TP53 mRNAs. Serine 185 bears the Phosphoserine mark. The segment at 201-225 (LYCALCKVAVNSLSQLEAHNKGTKH) adopts a Matrin-type 2 zinc-finger fold. Threonine 248 is subject to Phosphothreonine. Residues 261 to 285 (FHCEICNVKVNSEVQLKQHISSRRH) form a Matrin-type 3 zinc finger. Positions 279-305 (HISSRRHRDGVAGKPNPLLSRHKKPRG) are disordered.

As to quaternary structure, interacts with p53/TP53; the interaction is direct and enhances p53/TP53 transactivation functions on cell-cycle arrest target genes, resulting in growth arrest. Interacts with ELAVL1; the interaction is indirect, mRNA-dependent and may regulate p53/TP53 expression. Ubiquitinated upon prolonged exposure to genotoxic stress, which leads to proteasomal degradation of ZNF385A and releases p53/TP53 from cell-cycle arrest target gene promoters. As to expression, expressed in brain and testis (at protein level). In brain, the expression is located to olfactory bulb, cerebral cortex, hippocampus, satellite cells and Purkinje cells of the cerebellum molecular layer. Detected in bone marrow, white and brown adipose tissue, lung and at lower levels in the thymus.

The protein localises to the cytoplasm. The protein resides in the nucleus. It is found in the nucleolus. It localises to the cell projection. Its subcellular location is the dendrite. Its function is as follows. RNA-binding protein that affects the localization and the translation of a subset of mRNA. May play a role in adipogenesis through binding to the 3'-UTR of CEBPA mRNA and regulation of its translation. Targets ITPR1 mRNA to dendrites in Purkinje cells, and may regulate its activity-dependent translation. With ELAVL1, binds the 3'-UTR of p53/TP53 mRNAs to control their nuclear export induced by CDKN2A. Hence, may regulate p53/TP53 expression and mediate in part the CDKN2A anti-proliferative activity. May also bind CCNB1 mRNA. Alternatively, may also regulate p53/TP53 activity through direct protein-protein interaction. Interacts with p53/TP53 and promotes cell-cycle arrest over apoptosis enhancing preferentially the DNA binding and transactivation of p53/TP53 on cell-cycle arrest target genes over proapoptotic target genes. May also regulate the ubiquitination and stability of CDKN1A promoting DNA damage-induced cell cycle arrest. Also plays a role in megakaryocytes differentiation. In Mus musculus (Mouse), this protein is Zinc finger protein 385A (Znf385a).